A 365-amino-acid polypeptide reads, in one-letter code: Protein-glutamate methylesterase/protein-glutamine glutaminase 1 (365 aa).

Positions 4 to 121 (KVLVVDDSQF…SRDSVVLKKR (118 aa)) constitute a Response regulatory domain. D55 carries the 4-aspartylphosphate modification. The interval 138–173 (AARSTTQPSGVRPSALGANLSSSRSPRPASSAPSAP) is disordered. The segment covering 158–172 (SSSRSPRPASSAPSA) has biased composition (low complexity). Residues 182-365 (KLVAIGASTG…QVWQRLVSDV (184 aa)) enclose the CheB-type methylesterase domain. Active-site residues include S189, H216, and D310.

Belongs to the CheB family. Post-translationally, phosphorylated by CheA. Phosphorylation of the N-terminal regulatory domain activates the methylesterase activity.

It localises to the cytoplasm. The catalysed reaction is [protein]-L-glutamate 5-O-methyl ester + H2O = L-glutamyl-[protein] + methanol + H(+). It carries out the reaction L-glutaminyl-[protein] + H2O = L-glutamyl-[protein] + NH4(+). Involved in chemotaxis. Part of a chemotaxis signal transduction system that modulates chemotaxis in response to various stimuli. Catalyzes the demethylation of specific methylglutamate residues introduced into the chemoreceptors (methyl-accepting chemotaxis proteins or MCP) by CheR. Also mediates the irreversible deamidation of specific glutamine residues to glutamic acid. The sequence is that of Protein-glutamate methylesterase/protein-glutamine glutaminase 1 from Saccharophagus degradans (strain 2-40 / ATCC 43961 / DSM 17024).